Consider the following 466-residue polypeptide: Cytochrome b561 and DOMON domain-containing protein At3g59070 (466 aa).

Positions 1-25 (MSLSSRATLVVLCCLFMLIPSFTTA) are cleaved as a signal peptide. Positions 57 to 172 (LNSYLHFNYA…TVVNHLWQDG (116 aa)) constitute a DOMON domain. Residues 179-380 (RLGMHAMSGD…MEILQFKKRW (202 aa)) form the Cytochrome b561 domain. Helical transmembrane passes span 219 to 239 (IHAI…VMAA), 252 to 272 (WFYI…IGGL), and 287 to 307 (TLHT…ILSL). Heme b-binding residues include His220, His256, His289, and His325. Helical transmembrane passes span 327 to 347 (TMGY…LSIL) and 355 to 375 (IAYT…EILQ).

Heme b serves as cofactor.

The protein resides in the membrane. Its function is as follows. May act as a catecholamine-responsive trans-membrane electron transporter. The chain is Cytochrome b561 and DOMON domain-containing protein At3g59070 from Arabidopsis thaliana (Mouse-ear cress).